Consider the following 238-residue polypeptide: tRNA (guanine-N(1)-)-methyltransferase (238 aa).

Residues Gly-110 and 129 to 134 contribute to the S-adenosyl-L-methionine site; that span reads LGDFIL.

This sequence belongs to the RNA methyltransferase TrmD family. In terms of assembly, homodimer.

It is found in the cytoplasm. It carries out the reaction guanosine(37) in tRNA + S-adenosyl-L-methionine = N(1)-methylguanosine(37) in tRNA + S-adenosyl-L-homocysteine + H(+). Functionally, specifically methylates guanosine-37 in various tRNAs. This is tRNA (guanine-N(1)-)-methyltransferase from Clostridium botulinum (strain Eklund 17B / Type B).